A 171-amino-acid polypeptide reads, in one-letter code: Der GTPase-activating protein YihI (171 aa).

Disordered regions lie at residues 1-99 (MKKP…PQAE) and 145-171 (GLSY…KGGN). Positions 20–30 (TREELNQEARD) are enriched in basic and acidic residues. Over residues 40–59 (HSAGSRANGSSASGSTAQNS) the composition is skewed to low complexity. The span at 148-160 (YEDDEDDEEEEKQ) shows a compositional bias: acidic residues.

It belongs to the YihI family. As to quaternary structure, interacts with Der.

Functionally, a GTPase-activating protein (GAP) that modifies Der/EngA GTPase function. May play a role in ribosome biogenesis. This is Der GTPase-activating protein YihI from Enterobacter sp. (strain 638).